A 354-amino-acid polypeptide reads, in one-letter code: Putative succinyl-diaminopimelate desuccinylase DapE (354 aa).

His-69 serves as a coordination point for Zn(2+). Residue Asp-71 is part of the active site. Asp-95 is a binding site for Zn(2+). The active-site Proton acceptor is Glu-125. Residues Glu-126, Glu-154, and His-330 each contribute to the Zn(2+) site.

The protein belongs to the peptidase M20A family. As to quaternary structure, homodimer. The cofactor is Zn(2+). Requires Co(2+) as cofactor.

The catalysed reaction is N-succinyl-(2S,6S)-2,6-diaminopimelate + H2O = (2S,6S)-2,6-diaminopimelate + succinate. It participates in amino-acid biosynthesis; L-lysine biosynthesis via DAP pathway; LL-2,6-diaminopimelate from (S)-tetrahydrodipicolinate (succinylase route): step 3/3. Its function is as follows. Catalyzes the hydrolysis of N-succinyl-L,L-diaminopimelic acid (SDAP), forming succinate and LL-2,6-diaminoheptanedioate (DAP), an intermediate involved in the bacterial biosynthesis of lysine and meso-diaminopimelic acid. This Mycobacterium tuberculosis (strain CDC 1551 / Oshkosh) protein is Putative succinyl-diaminopimelate desuccinylase DapE (dapE).